Here is a 108-residue protein sequence, read N- to C-terminus: Large ribosomal subunit protein P1 (108 aa).

A disordered region spans residues 67–108 (PAAAPAEAGGEEKKEEEKKEEEEKEEEVSEEEALAGLSALFG). Over residues 84–99 (KKEEEEKEEEVSEEEA) the composition is skewed to acidic residues.

Belongs to the eukaryotic ribosomal protein P1/P2 family. Part of the 50S ribosomal subunit. Homodimer, it forms part of the ribosomal stalk which helps the ribosome interact with GTP-bound translation factors. Forms a heptameric uL10/P0(P1)2(P1)2(P1)2 complex, where uL10/P0 forms an elongated spine to which the P1 dimers bind in a sequential fashion.

Its function is as follows. Forms part of the ribosomal stalk, playing a central role in the interaction of the ribosome with GTP-bound translation factors. The stalk complex of P.horikoshii binds to E.coli large subunits and confers on them the ability to interact with eukaryotic elongation factors. Each succesive P1 dimer bound along the P0 spine increases the GTPase activity of elongation factors and increases translation by reconsituted ribosomes. This is Large ribosomal subunit protein P1 from Pyrococcus horikoshii (strain ATCC 700860 / DSM 12428 / JCM 9974 / NBRC 100139 / OT-3).